Reading from the N-terminus, the 309-residue chain is Ribonuclease Z (309 aa).

Positions 63, 65, 67, 68, 145, 216, and 274 each coordinate Zn(2+). Catalysis depends on D67, which acts as the Proton acceptor.

This sequence belongs to the RNase Z family. In terms of assembly, homodimer. Requires Zn(2+) as cofactor.

It carries out the reaction Endonucleolytic cleavage of RNA, removing extra 3' nucleotides from tRNA precursor, generating 3' termini of tRNAs. A 3'-hydroxy group is left at the tRNA terminus and a 5'-phosphoryl group is left at the trailer molecule.. Its function is as follows. Zinc phosphodiesterase, which displays some tRNA 3'-processing endonuclease activity. Probably involved in tRNA maturation, by removing a 3'-trailer from precursor tRNA. This is Ribonuclease Z from Streptococcus gordonii (strain Challis / ATCC 35105 / BCRC 15272 / CH1 / DL1 / V288).